Reading from the N-terminus, the 535-residue chain is Alpha-1,3-mannosyl-glycoprotein 4-beta-N-acetylglucosaminyltransferase A (535 aa).

The Cytoplasmic segment spans residues 1 to 6; it reads MRLRNG. Residues 7-27 traverse the membrane as a helical; Signal-anchor for type II membrane protein segment; it reads TVATVLAFITSFLTLSWYTTW. Residues 28–535 lie on the Lumenal side of the membrane; it reads QNGKEKVIAY…NEIHIKKVTN (508 aa). Residues 31-57 adopt a coiled-coil conformation; it reads KEKVIAYQREFLALKERLRIAEHRISQ. N-linked (GlcNAc...) asparagine glycosylation is found at Asn-77 and Asn-458. At Ser-474 the chain carries Phosphoserine.

It belongs to the glycosyltransferase 54 family. A divalent metal cation serves as cofactor. N-glycosylated. As to expression, highly expressed in small intestine, kidney, lung and spleen. Weakly expressed in brain, heart and liver.

The protein resides in the golgi apparatus membrane. Its subcellular location is the secreted. It catalyses the reaction N(4)-{beta-D-GlcNAc-(1-&gt;2)-alpha-D-Man-(1-&gt;3)-[beta-D-GlcNAc-(1-&gt;2)-alpha-D-Man-(1-&gt;6)]-beta-D-Man-(1-&gt;4)-beta-D-GlcNAc-(1-&gt;4)-beta-D-GlcNAc}-L-asparaginyl-[protein] + UDP-N-acetyl-alpha-D-glucosamine = N(4)-{beta-D-GlcNAc-(1-&gt;2)-[beta-D-GlcNAc-(1-&gt;4)]-alpha-D-Man-(1-&gt;3)-[beta-D-GlcNAc-(1-&gt;2)-alpha-D-Man-(1-&gt;6)]-beta-D-Man-(1-&gt;4)-beta-D-GlcNAc-(1-&gt;4)-beta-D-GlcNAc}-L-asparaginyl-[protein] + UDP + H(+). The catalysed reaction is an N(4)-{beta-D-GlcNAc-(1-&gt;2)-alpha-D-Man-(1-&gt;3)-[alpha-D-Man-(1-&gt;6)]-beta-D-Man-(1-&gt;4)-beta-D-GlcNAc-(1-&gt;4)-beta-D-GlcNAc}-L-asparaginyl-[protein] + UDP-N-acetyl-alpha-D-glucosamine = an N(4)-{beta-D-GlcNAc-(1-&gt;2)-[beta-D-GlcNAc-(1-&gt;4)]-alpha-D-Man-(1-&gt;3)-[alpha-D-Man-(1-&gt;6)]-beta-D-Man-(1-&gt;4)-beta-D-GlcNAc-(1-&gt;4)-beta-D-GlcNAc}-L-asparaginyl-[protein] + UDP + H(+). The enzyme catalyses an N(4)-{beta-D-GlcNAc-(1-&gt;2)-alpha-D-Man-(1-&gt;3)-[beta-D-GlcNAc-(1-&gt;2)-[beta-D-GlcNAc-(1-&gt;6)]-alpha-D-Man-(1-&gt;6)]-beta-D-Man-(1-&gt;4)-beta-D-GlcNAc-(1-&gt;4)-beta-D-GlcNAc}-L-asparaginyl-[protein] + UDP-N-acetyl-alpha-D-glucosamine = an N(4)-{beta-D-GlcNAc-(1-&gt;2)-[beta-D-GlcNAc-(1-&gt;4)]-alpha-D-Man-(1-&gt;3)-[beta-D-GlcNAc-(1-&gt;2)-[beta-D-GlcNAc-(1-&gt;6)]-alpha-D-Man-(1-&gt;6)]-beta-D-Man-(1-&gt;4)-beta-D-GlcNAc-(1-&gt;4)-beta-D-GlcNAc}-L-asparaginyl-[protein] + UDP + H(+). It carries out the reaction an N(4)-{beta-D-GlcNAc-(1-&gt;2)-alpha-D-Man-(1-&gt;3)-[beta-D-GlcNAc-(1-&gt;2)-alpha-D-Man-(1-&gt;6)]-beta-D-Man-(1-&gt;4)-beta-D-GlcNAc-(1-&gt;4)-[alpha-L-Fuc-(1-&gt;6)]-beta-D-GlcNAc}-L-asparaginyl-[protein] + UDP-N-acetyl-alpha-D-glucosamine = N(4)-{beta-D-GlcNAc-(1-&gt;2)-[beta-D-GlcNAc-(1-&gt;4)]-alpha-D-Man-(1-&gt;3)-[beta-D-GlcNAc-(1-&gt;2)-alpha-D-Man-(1-&gt;6)]-beta-D-Man-(1-&gt;4)-beta-D-GlcNAc-(1-&gt;4)-[alpha-L-Fuc-(1-&gt;6)]-beta-D-GlcNAc}-asparaginyl-[protein] + UDP + H(+). It catalyses the reaction an N(4)-{beta-D-GlcNAc-(1-&gt;2)-alpha-D-Man-(1-&gt;3)-[beta-D-Gal-(1-&gt;4)-beta-D-GlcNAc-(1-&gt;2)-alpha-D-Man-(1-&gt;6)]-beta-D-Man-(1-&gt;4)-beta-D-GlcNAc-(1-&gt;4)-beta-D-GlcNAc}-L-asparaginyl-[protein] + UDP-N-acetyl-alpha-D-glucosamine = an N(4)-{beta-D-GlcNAc-(1-&gt;2)-[beta-D-GlcNAc-(1-&gt;4)]-alpha-D-Man-(1-&gt;3)-[beta-D-Gal-(1-&gt;4)-beta-D-GlcNAc-(1-&gt;2)-alpha-D-Man-(1-&gt;6)]-beta-D-Man-(1-&gt;4)-beta-D-GlcNAc-(1-&gt;4)-beta-D-GlcNAc}-L-asparaginyl-[protein] + UDP + H(+). The catalysed reaction is N(4)-{beta-D-GlcNAc-(1-&gt;2)-alpha-D-Man-(1-&gt;3)-[alpha-D-Man-(1-&gt;3)-{alpha-D-Man-(1-&gt;6)}-alpha-D-Man-(1-&gt;6)]-beta-D-Man-(1-&gt;4)-beta-D-GlcNAc-(1-&gt;4)-beta-D-GlcNAc}-asparaginyl-[protein] + UDP-N-acetyl-alpha-D-glucosamine = N(4)-{beta-D-GlcNAc-(1-&gt;2)-[beta-D-GlcNAc-(1-&gt;4)]-alpha-D-Man-(1-&gt;3)-[alpha-D-Man-(1-&gt;3)-{alpha-D-Man-(1-&gt;6)}-alpha-D-Man-(1-&gt;6)]-beta-D-Man-(1-&gt;4)-beta-D-GlcNAc-(1-&gt;4)-beta-D-GlcNAc}-asparaginyl-[protein] + UDP + H(+). The enzyme catalyses N(4)-{beta-D-GlcNAc-(1-&gt;2)-alpha-D-Man-(1-&gt;3)-beta-D-Man-(1-&gt;4)-beta-D-GlcNAc-(1-&gt;4)-beta-D-GlcNAc}-asparaginyl-[protein] + UDP-N-acetyl-alpha-D-glucosamine = N(4)-{beta-D-GlcNAc-(1-&gt;2)-[beta-D-GlcNAc-(1-&gt;4)]-alpha-D-Man-(1-&gt;3)-beta-D-Man-(1-&gt;4)-beta-D-GlcNAc-(1-&gt;4)-beta-D-GlcNAc}-asparaginyl-[protein] + UDP + H(+). The protein operates within protein modification; protein glycosylation. Its activity is regulated as follows. Inhibited by UDP. Functionally, glycosyltransferase that catalyze the transfer of GlcNAc from UDP-GlcNAc to the GlcNAcbeta1-2Manalpha1-3 arm of the core structure of N-linked glycans through a beta1-4 linkage and participates in the production of tri- and tetra-antennary N-linked sugar chains. Involved in glucose transport by mediating SLC2A2/GLUT2 glycosylation, thereby controlling cell-surface expression of SLC2A2 in pancreatic beta cells. The protein is Alpha-1,3-mannosyl-glycoprotein 4-beta-N-acetylglucosaminyltransferase A of Bos taurus (Bovine).